The primary structure comprises 269 residues: Arginine and glutamate-rich protein 1-B (269 aa).

Over residues 1–57 (MGRSRSRSSSRSKHSKTSKHSKKRSRSRSRSRDRERKRRSKSRESKRNRRRESRSRS) the composition is skewed to basic residues. Residues 1–70 (MGRSRSRSSS…TATSRRDRER (70 aa)) are necessary and sufficient for RNA binding. Disordered stretches follow at residues 1 to 109 (MGRS…MERQ) and 233 to 269 (RMKLEQERQKQQKEEQKMILGKGKSRPKLSFSLKASE). 3 stretches are compositionally biased toward basic and acidic residues: residues 64–80 (SRRDRERAASPPERIDI), 89–109 (SAVDEKQKKEEEEKKVEMERQ), and 233–249 (RMKLEQERQKQQKEEQK). Residues 71 to 269 (AASPPERIDI…KLSFSLKASE (199 aa)) form a necessary and sufficient for transcriptional regulation region.

This sequence belongs to the ARGLU1 family.

It is found in the nucleus. The protein localises to the nucleus speckle. It localises to the chromosome. Functionally, dual function regulator of gene expression; regulator of transcription and modulator of alternative splicing. General coactivator of nuclear receptor-induced gene expression. The chain is Arginine and glutamate-rich protein 1-B (arglu1b) from Danio rerio (Zebrafish).